The following is a 399-amino-acid chain: Elongation factor Tu (399 aa).

A tr-type G domain is found at 10–209; sequence KPHVNIGTIG…AVDSYIPTPV (200 aa). Residues 19–26 are G1; sequence GHVDHGKT. 19–26 is a binding site for GTP; that stretch reads GHVDHGKT. Residue threonine 26 participates in Mg(2+) binding. The segment at 60–64 is G2; the sequence is GITIA. The tract at residues 81–84 is G3; sequence DCPG. GTP is bound by residues 81–85 and 136–139; these read DCPGH and NKAD. The segment at 136 to 139 is G4; the sequence is NKAD. The interval 174 to 176 is G5; that stretch reads SAL.

Belongs to the TRAFAC class translation factor GTPase superfamily. Classic translation factor GTPase family. EF-Tu/EF-1A subfamily. Monomer.

The protein resides in the cytoplasm. The enzyme catalyses GTP + H2O = GDP + phosphate + H(+). GTP hydrolase that promotes the GTP-dependent binding of aminoacyl-tRNA to the A-site of ribosomes during protein biosynthesis. This chain is Elongation factor Tu, found in Campylobacter concisus (strain 13826).